Here is a 152-residue protein sequence, read N- to C-terminus: Regulatory protein RecX (152 aa).

Belongs to the RecX family.

It localises to the cytoplasm. Its function is as follows. Modulates RecA activity. The sequence is that of Regulatory protein RecX from Haemophilus influenzae (strain 86-028NP).